The chain runs to 557 residues: Dihydroxy-acid dehydratase (557 aa).

Residue C49 coordinates [2Fe-2S] cluster. Position 81 (D81) interacts with Mg(2+). Residue C122 coordinates [2Fe-2S] cluster. The Mg(2+) site is built by D123 and K124. K124 carries the N6-carboxylysine modification. C194 serves as a coordination point for [2Fe-2S] cluster. A Mg(2+)-binding site is contributed by E446. S472 acts as the Proton acceptor in catalysis.

This sequence belongs to the IlvD/Edd family. In terms of assembly, homodimer. Requires [2Fe-2S] cluster as cofactor. It depends on Mg(2+) as a cofactor.

It carries out the reaction (2R)-2,3-dihydroxy-3-methylbutanoate = 3-methyl-2-oxobutanoate + H2O. The enzyme catalyses (2R,3R)-2,3-dihydroxy-3-methylpentanoate = (S)-3-methyl-2-oxopentanoate + H2O. Its pathway is amino-acid biosynthesis; L-isoleucine biosynthesis; L-isoleucine from 2-oxobutanoate: step 3/4. It functions in the pathway amino-acid biosynthesis; L-valine biosynthesis; L-valine from pyruvate: step 3/4. Functionally, functions in the biosynthesis of branched-chain amino acids. Catalyzes the dehydration of (2R,3R)-2,3-dihydroxy-3-methylpentanoate (2,3-dihydroxy-3-methylvalerate) into 2-oxo-3-methylpentanoate (2-oxo-3-methylvalerate) and of (2R)-2,3-dihydroxy-3-methylbutanoate (2,3-dihydroxyisovalerate) into 2-oxo-3-methylbutanoate (2-oxoisovalerate), the penultimate precursor to L-isoleucine and L-valine, respectively. The sequence is that of Dihydroxy-acid dehydratase from Prochlorococcus marinus (strain MIT 9312).